A 268-amino-acid polypeptide reads, in one-letter code: Pantothenate synthetase (268 aa).

18 to 25 (MGYLHEGH) is a binding site for ATP. Histidine 25 serves as the catalytic Proton donor. Glutamine 49 serves as a coordination point for (R)-pantoate. Glutamine 49 is a beta-alanine binding site. 135-138 (GQKD) contacts ATP. Residue glutamine 141 participates in (R)-pantoate binding. ATP is bound by residues valine 164 and 172-175 (LSSR).

This sequence belongs to the pantothenate synthetase family. In terms of assembly, homodimer.

It is found in the cytoplasm. The catalysed reaction is (R)-pantoate + beta-alanine + ATP = (R)-pantothenate + AMP + diphosphate + H(+). It functions in the pathway cofactor biosynthesis; (R)-pantothenate biosynthesis; (R)-pantothenate from (R)-pantoate and beta-alanine: step 1/1. Its function is as follows. Catalyzes the condensation of pantoate with beta-alanine in an ATP-dependent reaction via a pantoyl-adenylate intermediate. In Dehalococcoides mccartyi (strain ATCC BAA-2266 / KCTC 15142 / 195) (Dehalococcoides ethenogenes (strain 195)), this protein is Pantothenate synthetase.